A 108-amino-acid polypeptide reads, in one-letter code: Peptidyl-prolyl cis-trans isomerase Fkbp12 (108 aa).

A disordered region spans residues 1–21 (MGVQVVPIAPGDGSTYPKNGQ). In terms of domain architecture, PPIase FKBP-type spans 20-108 (GQKVTVHYTG…TFDVELLKVE (89 aa)).

This sequence belongs to the FKBP-type PPIase family. FKBP1 subfamily.

Its subcellular location is the cytoplasm. It catalyses the reaction [protein]-peptidylproline (omega=180) = [protein]-peptidylproline (omega=0). Functionally, PPIases accelerate the folding of proteins. It catalyzes the cis-trans isomerization of proline imidic peptide bonds in oligopeptides. Binds to ligand-free TGF beta type I receptor, from which it is released upon a ligand-induced, type II receptor mediated phosphorylation of the type I receptor. Binding is inhibitory to the signaling pathways of the TGF beta family ligands. The polypeptide is Peptidyl-prolyl cis-trans isomerase Fkbp12 (Drosophila melanogaster (Fruit fly)).